The sequence spans 373 residues: Erythronate-4-phosphate dehydrogenase (373 aa).

Substrate-binding residues include Ser45 and Thr67. Residues Asp147, 206–208 (ASR), and Asp232 each bind NAD(+). The active site involves Arg208. Glu237 is a catalytic residue. Catalysis depends on His254, which acts as the Proton donor. Gly257 contributes to the NAD(+) binding site. A substrate-binding site is contributed by Tyr258.

It belongs to the D-isomer specific 2-hydroxyacid dehydrogenase family. PdxB subfamily. In terms of assembly, homodimer.

Its subcellular location is the cytoplasm. It carries out the reaction 4-phospho-D-erythronate + NAD(+) = (R)-3-hydroxy-2-oxo-4-phosphooxybutanoate + NADH + H(+). The protein operates within cofactor biosynthesis; pyridoxine 5'-phosphate biosynthesis; pyridoxine 5'-phosphate from D-erythrose 4-phosphate: step 2/5. In terms of biological role, catalyzes the oxidation of erythronate-4-phosphate to 3-hydroxy-2-oxo-4-phosphonooxybutanoate. The chain is Erythronate-4-phosphate dehydrogenase from Tolumonas auensis (strain DSM 9187 / NBRC 110442 / TA 4).